Reading from the N-terminus, the 341-residue chain is Serpentine receptor class alpha-28 (341 aa).

Helical transmembrane passes span 25 to 45, 57 to 77, 107 to 129, 142 to 162, 188 to 208, 242 to 262, and 275 to 295; these read FIISIIIISFFTTTKSVRVLL, LLFSAIINGIIHQCVTAVIRL, YYYTNLFSSFCCFSLFLDRLFSF, ASIVLILSQIVLPIGPLYWVF, VNNIRICVLIVLLFFAIFLYI, IVIFSQILCVGPTSSITSVFI, and LIISYLTGLTYSNFLLPLIIL.

This sequence belongs to the nematode receptor-like protein sra family.

Its subcellular location is the membrane. The sequence is that of Serpentine receptor class alpha-28 (sra-28) from Caenorhabditis elegans.